The sequence spans 520 residues: MSLSLLIAGALFIGFLTYYIWIWSFWIRKGVKGPRGFPFFGVILKFHDYENPGLLKLGEWTKKYGSIYGITEGVEKTLVVSNPEFVHEVFVKQFDNFYGRKTNPIQGDPNKNKRAHLVLAQGHRWKRLRTLASPTFSNKSLRKIMSTVEETVVELMRHLDEASAKGKAVDLLDYYQEFTLDIIGRIAMGQTESLMFRNPMLPKVKEIFKKGGKMPFLIAGVFPIAGTLMRQLFMKFPKFSPAFGIMNTMEKALNKRLEQRAADKKAGIEPSGEPQDFIDLFLDARANVDFIEEESTLGFAKSEVLKVDKHLTFDEIIGQLFVFLLAGYDTTALSLSYSSYLLATHPEIQKKLQEEVDRECPDPEVTFDQISKLKYMECVVKEALRMYPLASLVHNRKCMKKTNVLGVEIDEGTNVQVDTWTLHYDPKVWGDDASEFKPERWETGDELFYAKGGYLPFGMGPRICIGMRLAMMEEKLLLTHILKKYTFDTSTETEIPLKLVGSATIAPRNVMLKLTPRHSN.

Position 464 (C464) interacts with heme.

It belongs to the cytochrome P450 family. Requires heme as cofactor.

In terms of biological role, cytochromes P450 are a group of heme-thiolate monooxygenases. They oxidize a variety of structurally unrelated compounds, including steroids, fatty acids, and xenobiotics. In Caenorhabditis elegans, this protein is Putative cytochrome P450 CYP13A4 (cyp-13A4).